A 380-amino-acid chain; its full sequence is Cytochrome b (380 aa).

4 consecutive transmembrane segments (helical) span residues 34–54 (FGSL…LLAT), 78–99 (WLIR…YLHI), 114–134 (WNTG…GYVL), and 179–199 (FFAL…IHLT). 2 residues coordinate heme b: His-84 and His-98. The heme b site is built by His-183 and His-197. Residue His-202 coordinates a ubiquinone. 4 helical membrane-spanning segments follow: residues 227–247 (LKDI…ALFS), 289–309 (LGGV…PLLH), 321–341 (LSQL…WVGS), and 348–368 (FIII…LLFP).

The protein belongs to the cytochrome b family. As to quaternary structure, the cytochrome bc1 complex contains 11 subunits: 3 respiratory subunits (MT-CYB, CYC1 and UQCRFS1), 2 core proteins (UQCRC1 and UQCRC2) and 6 low-molecular weight proteins (UQCRH/QCR6, UQCRB/QCR7, UQCRQ/QCR8, UQCR10/QCR9, UQCR11/QCR10 and a cleavage product of UQCRFS1). This cytochrome bc1 complex then forms a dimer. Requires heme b as cofactor.

It localises to the mitochondrion inner membrane. Component of the ubiquinol-cytochrome c reductase complex (complex III or cytochrome b-c1 complex) that is part of the mitochondrial respiratory chain. The b-c1 complex mediates electron transfer from ubiquinol to cytochrome c. Contributes to the generation of a proton gradient across the mitochondrial membrane that is then used for ATP synthesis. The chain is Cytochrome b (MT-CYB) from Cepphus grylle (Black guillemot).